A 511-amino-acid polypeptide reads, in one-letter code: MWELVALLLLTLAYFFWSKSKTCGAKSPKSLPFLPLVGSLPFIPRHGHPHVNFFKLQEKYGPIYSLRLGSTTTVIIGQYQLAKEVLVKKGKEFSGRPHMVTLGLLSDQGKGIAFADSGGSWQLHRKLALSSFALFRDGNQKLEKIICQKASSLCDFLLTHNEESIDLSEPIFNSITNIICIICFGISYENRDPILATIKSFTEGILNSLGNDHLVDIFPWLTIFPNKTVDMIKKNVKIRDEVLSGILEKCKEKFNSDSISSLMDLLIQAKTNADNNNTSEGQGSNAFSDMHILATIADIFGAGIETTASVLSWIIAFLLHNPEVKKKIQKEIDQNIGFSRTPTFNDRNHLLMLEATIREVLRIRPVAPMLIPHRANSDMSIGEFSIPKFTPVIINLWALHHSEKEWDQPDRFMPERFLDPTGSHLITPSLSYLPFGAGARSCIGEVLARQELFLFMAHLLQRFDLDVPDDEQPPCLKGNANVVFLIDPFKVKITVRQAWKDAQAEVNTWRP.

Cysteine 442 provides a ligand contact to heme.

The protein belongs to the cytochrome P450 family. It depends on heme as a cofactor.

Its subcellular location is the endoplasmic reticulum membrane. It is found in the microsome membrane. The catalysed reaction is a C21-steroid + reduced [NADPH--hemoprotein reductase] + O2 = a 17alpha-hydroxy-C21-steroid + oxidized [NADPH--hemoprotein reductase] + H2O + H(+). It carries out the reaction progesterone + reduced [NADPH--hemoprotein reductase] + O2 = 17alpha-hydroxyprogesterone + oxidized [NADPH--hemoprotein reductase] + H2O + H(+). It catalyses the reaction pregnenolone + reduced [NADPH--hemoprotein reductase] + O2 = 17alpha-hydroxypregnenolone + oxidized [NADPH--hemoprotein reductase] + H2O + H(+). The enzyme catalyses 17alpha-hydroxyprogesterone + reduced [NADPH--hemoprotein reductase] + O2 = androst-4-ene-3,17-dione + acetate + oxidized [NADPH--hemoprotein reductase] + H2O + 2 H(+). The catalysed reaction is 17alpha-hydroxyprogesterone + reduced [NADPH--hemoprotein reductase] + O2 = 16alpha,17alpha-dihydroxyprogesterone + oxidized [NADPH--hemoprotein reductase] + H2O + H(+). It carries out the reaction 16alpha,17alpha-dihydroxyprogesterone + reduced [NADPH--hemoprotein reductase] + O2 = 6beta,16alpha,17alpha-trihydroxyprogesterone + oxidized [NADPH--hemoprotein reductase] + H2O + H(+). It catalyses the reaction 17alpha-hydroxypregnenolone + reduced [NADPH--hemoprotein reductase] + O2 = 3beta-hydroxyandrost-5-en-17-one + acetate + oxidized [NADPH--hemoprotein reductase] + H2O + 2 H(+). The enzyme catalyses 16alpha,17alpha-dihydroxypregnenolone + reduced [NADPH--hemoprotein reductase] + O2 = 3beta,16alpha-dihydroxy-androst-5-en-17-one + acetate + oxidized [NADPH--hemoprotein reductase] + H2O + 2 H(+). The catalysed reaction is 3beta-hydroxyandrost-5-en-17-one + reduced [NADPH--hemoprotein reductase] + O2 = 3beta,16alpha-dihydroxy-androst-5-en-17-one + oxidized [NADPH--hemoprotein reductase] + H2O + H(+). It carries out the reaction androst-4-ene-3,17-dione + reduced [NADPH--hemoprotein reductase] + O2 = 16alpha-hydroxyandrost-4-ene-3,17-dione + oxidized [NADPH--hemoprotein reductase] + H2O + H(+). It functions in the pathway steroid hormone biosynthesis. The protein operates within steroid biosynthesis; glucocorticoid biosynthesis. With respect to regulation, regulated predominantly by intracellular cAMP levels. The 17,20-lyase activity is stimulated by cytochrome b5, which acts as an allosteric effector increasing the Vmax of the lyase activity. Its function is as follows. A cytochrome P450 monooxygenase involved in corticoid and androgen biosynthesis. Catalyzes 17-alpha hydroxylation of C21 steroids, which is common for both pathways. A second oxidative step, required only for androgen synthesis, involves an acyl-carbon cleavage. The 17-alpha hydroxy intermediates, as part of adrenal glucocorticoids biosynthesis pathway, are precursors of cortisol. Hydroxylates steroid hormones, pregnenolone and progesterone to form 17-alpha hydroxy metabolites, followed by the cleavage of the C17-C20 bond to form C19 steroids, dehydroepiandrosterone (DHEA) and androstenedione. Has 16-alpha hydroxylase activity. Catalyzes 16-alpha hydroxylation of 17-alpha hydroxy pregnenolone, followed by the cleavage of the C17-C20 bond to form 16-alpha-hydroxy DHEA. Also 16-alpha hydroxylates androgens, relevant for estriol synthesis. Mechanistically, uses molecular oxygen inserting one oxygen atom into a substrate, and reducing the second into a water molecule, with two electrons provided by NADPH via cytochrome P450 reductase (CPR; NADPH-ferrihemoprotein reductase). The protein is Steroid 17-alpha-hydroxylase/17,20 lyase (CYP17A1) of Mesocricetus auratus (Golden hamster).